The following is a 505-amino-acid chain: Ribose import ATP-binding protein RbsA (505 aa).

ABC transporter domains are found at residues 12-249 and 259-504; these read LQMK…VGRK and VKKG…VAFS. Residue 44–51 participates in ATP binding; it reads GENGAGKS.

This sequence belongs to the ABC transporter superfamily. Ribose importer (TC 3.A.1.2.1) family. As to quaternary structure, the complex is composed of an ATP-binding protein (RbsA), two transmembrane proteins (RbsC) and a solute-binding protein (RbsB).

Its subcellular location is the cell membrane. The catalysed reaction is D-ribose(out) + ATP + H2O = D-ribose(in) + ADP + phosphate + H(+). Part of the ABC transporter complex RbsABC involved in ribose import. Responsible for energy coupling to the transport system. The protein is Ribose import ATP-binding protein RbsA of Clostridium tetani (strain Massachusetts / E88).